The following is an 883-amino-acid chain: NF-X1-type zinc finger protein NFXL2 (883 aa).

Residues 1 to 10 (MTNMAGTATT) show a composition bias toward polar residues. The interval 1–44 (MTNMAGTATTEFRWKSPPQPPSQEQPISDSDSDSGSDSENHQHR) is disordered. The segment at 87-152 (CLICLERIKR…EAVWNCPKCR (66 aa)) adopts an RING-type; degenerate zinc-finger fold. 11 NF-X1-type zinc fingers span residues 198–216 (CGHC…SCPK), 250–269 (CNIH…PCRE), 303–322 (CGKH…LCPY), 357–377 (CGYH…TCRI), 410–429 (CARH…PCSE), 437–456 (CRNH…PCPI), 494–515 (CRHG…PCRL), 523–568 (CGHK…RCPE), 605–636 (CGNH…KCDL), 646–664 (CQHP…PCKT), and 709–738 (CTHL…RCKC). Residues 798 to 824 (EIEEKEEPSGKNASKRRKRRGRGQDIQ) form a disordered region. The helical transmembrane segment at 841–863 (MVVMLVAMLAAVSYYGYKGLLWL) threads the bilayer.

This sequence belongs to the NFX1 family. As to quaternary structure, interacts with ADO1/ZTL. In terms of tissue distribution, constitutively expressed in mesophyll and guard cells.

The protein localises to the nucleus. It is found in the membrane. It participates in protein modification; protein ubiquitination. Functionally, probable transcriptional regulator. May mediate E2- or E3-dependent ubiquitination. Required to gate light sensitivity during the night. Regulates the speed of the clock by acting in the feedback loop between CCA1, LHY and APRR1/TOC1. Promotes the expression of CCA1 at night but not by days. This activational effect is enhanced by interaction with ADO1/ZTL. Association with ADO1/ZTL is not leading to the degradation of NFXL2. Confers sensitivity to osmotic stress such as high salinity. Prevents H(2)O(2) production and abscisic acid accumulation. Part of a regulatory network that integrates the biosynthesis and action of abscisic acid, reactive oxygen species and cuticle components. The polypeptide is NF-X1-type zinc finger protein NFXL2 (NFXL2) (Arabidopsis thaliana (Mouse-ear cress)).